The sequence spans 988 residues: MIKNREIEVAPPRRTIQFGGYTFVEPDLNFKAPIFSCCGSIRDPSCEEREEEYIDNGHDEEPPVEVNRIQESTSFDEPVSSPPRYRPSENPGPSSSSYEPGHYSFNEYQQFPSRPQKRLVDPPIVDLDEEPPIVDLDDSFDNFHVGSTSEEVVSGDIAPEEEEEEGHDSFDDFESVPAQPPSKNTLASLQKSDSEIALNQQRHDMHGRFRGFLQDDSEEFSDEVGLLGADMNKELYDTLKSKFGFNQFRHRQKQCILSTLMGHDTFVLMPTGAGKSLCYQLPAVILPGVTVVVSPLRSLIEDQKMKMKELGIGCEALTADLGAPAQEKIYAELGSGNPSIKLLYVTPEKISASGRLNSVFFDLHRRGLLARFVIDEAHCVSQWGHDFRPDYTKLSSLREKYANPPVPIIALTATATPKIVTDARDHLKMQNSKLFISSFVRDNLKYDLIPKAARSLINVVEKMKQLYPGKSGIVYCLSRKECETVQMMLTKAGLSAEVYHAGLNDNLRVSVQRSWIANKFDVICATIAFGMGIDKPDVRFVIHYSLPKSIEGYYQETGRAGRDGMPSYCLMLYSYHDSIRLRRMIEEGNTTTGVRSMHLNNVLQVVAYCENVSVCRRKMLVEHFGEVYDEQSCRNSKTPCDICERQRKNAEAIRLFDVSTDALSILKCLPRMQKATLKYISELYRGALIKKSQEQAMRLGHTKLPFYSKGQGMSEQDALRFVRKLVIEGYIHERLYSVPNQAAAVFAYAELTEAGRDLANGKKTAKVYLHIVTCERKRKNAGLIELSNMNIVSEAQALKERHMVKHGDVFTRCLQDLTHLITAVAESSGLSGPYSIVSREGIEQIAALLPRTNSDLLRIDSMTQIKVTKYGRLIMELLATYWKQVDEREEEEMRNQLDKLKSGEIVMGGFATLQSDPGFPSVPYMKPLGGGGGCRGRGKKRAFSGFSSGRATKKPRATAPSARGKTSGRGGAKPATSLKRNMYPATSM.

Residues 46 to 119 form a disordered region; sequence CEEREEEYID…QFPSRPQKRL (74 aa). 2 consecutive repeat copies span residues 121-129 and 130-138. Residues 121–138 are 2 X 9 AA tandem repeats of [DE]-P-P-I-V-D-L-D-[ED]; sequence DPPIVDLDEEPPIVDLDD. Positions 148-185 are disordered; sequence TSEEVVSGDIAPEEEEEEGHDSFDDFESVPAQPPSKNT. Acidic residues predominate over residues 158–174; it reads APEEEEEEGHDSFDDFE. ATP-binding positions include 248–252 and 272–276; these read FRHRQ and GAGKS. Residues 256 to 433 form the Helicase ATP-binding domain; that stretch reads ILSTLMGHDT…RDHLKMQNSK (178 aa). A DEAH box motif is present at residues 375–378; the sequence is DEAH. A Helicase C-terminal domain is found at 458–603; the sequence is NVVEKMKQLY…VRSMHLNNVL (146 aa). The interval 478–480 is 3' overhang DNA-binding; that stretch reads SRK. An ATP-binding site is contributed by arginine 562. Residues 580–583 are 3' overhang DNA-binding; sequence RLRR. Positions 615, 633, 640, and 643 each coordinate Zn(2+). 3' overhang DNA-binding stretches follow at residues 676–678, 687–691, and 736–742; these read TLK, ALIKK, and YSVPNQA. Residues 807–888 enclose the HRDC domain; it reads GDVFTRCLQD…ATYWKQVDER (82 aa). The segment at 930-988 is disordered; sequence GGGGCRGRGKKRAFSGFSSGRATKKPRATAPSARGKTSGRGGAKPATSLKRNMYPATSM. The Nuclear localization signal motif lies at 939–955; it reads KKRAFSGFSSGRATKKP.

It belongs to the helicase family. RecQ subfamily. In terms of assembly, monomer. Homodimer (via N-terminus). Homotetramer (via N-terminus); dimer of dimers. Homohexamer (via N-terminus). Self-association negatively regulates DNA unwinding amplitude and rate. Oligomer forms dissociate into monomer in presence of ATP. Component of the BTR double Holliday Junction dissolution complex composed of at least him-6, top-3, rmh-1 and rmif-2, which is involved in double strand break repair in the germline. May interact with rmh-1; the interaction is required for mutual stability and localization at nuclear foci. Forms a complex composed of cdc-48.1, him-6 and crp-1; within the complex, interacts with cdc-48.1. Requires Zn(2+) as cofactor.

It localises to the nucleus. The protein localises to the chromosome. It catalyses the reaction Couples ATP hydrolysis with the unwinding of duplex DNA by translocating in the 3'-5' direction.. The catalysed reaction is ATP + H2O = ADP + phosphate + H(+). Its function is as follows. Component of the BTR double Holliday Junction dissolution complex, which is involved in homologous recombination during meiotic double strand break in the germline. Stabilizes and positively regulates the localization of the BTR double Holliday Junction dissolution complex component rmh-1 at nuclear foci during meiotic recombination. Participates in DNA replication and repair. Exhibits a magnesium-dependent ATP-dependent DNA-helicase activity that unwinds single- and double-stranded DNA in a 3'-5' direction. Negatively regulates sister chromatid exchange (SCE). Functionally, ATP-dependent DNA helicase that unwinds single- and double-stranded DNA in a 3'-5' direction. Participates in DNA replication and repair. Negatively regulates sister chromatid exchange (SCE). Stimulates DNA 4-way junction branch migration and DNA Holliday junction dissolution. Binds single-stranded DNA (ssDNA), forked duplex DNA and DNA Holliday junction. This Caenorhabditis elegans protein is RecQ-like DNA helicase blm-1.